The primary structure comprises 185 residues: Elongation factor P (185 aa).

It belongs to the elongation factor P family.

It localises to the cytoplasm. It functions in the pathway protein biosynthesis; polypeptide chain elongation. Involved in peptide bond synthesis. Stimulates efficient translation and peptide-bond synthesis on native or reconstituted 70S ribosomes in vitro. Probably functions indirectly by altering the affinity of the ribosome for aminoacyl-tRNA, thus increasing their reactivity as acceptors for peptidyl transferase. The protein is Elongation factor P of Lactococcus lactis subsp. cremoris (strain MG1363).